The primary structure comprises 486 residues: Vanillin dehydrogenase (486 aa).

NAD(+) contacts are provided by residues 210–211 (GP), 230–231 (GS), and 252–254 (ELG). The active-site Proton acceptor is Glu-252. Catalysis depends on Cys-286, which acts as the Nucleophile. An NAD(+)-binding site is contributed by 380–382 (EVF).

The protein belongs to the aldehyde dehydrogenase family.

The enzyme catalyses vanillin + NAD(+) + H2O = vanillate + NADH + 2 H(+). Catalyzes NAD(+)-dependent oxidation of vanillin to vanillate. Also oxidizes other aromatic aldehydes including benzaldehyde, coniferyl aldehyde and cinnamaldehyde, but has a preference for vanillin. Not active with NADP(+). Involved in the degradation pathway of lignin-derived aromatic compounds of plant cell walls. Catalyzes the conversion of vanillin to vanillate due to toxicity of vanillin to the cells. This is Vanillin dehydrogenase from Amycolatopsis sp. (strain ATCC 39116 / 75iv2).